Reading from the N-terminus, the 275-residue chain is Caspase-3 (275 aa).

Residue M1 is modified to N-acetylmethionine. Propeptides lie at residues 1-9 (MENTENSVD) and 10-28 (SKSIKTSETKILHGSKSMD). K11 carries the N6-acetyllysine modification. S26 bears the Phosphoserine mark. Active-site residues include H121 and C163. An S-nitrosocysteine; in inhibited form modification is found at C163.

This sequence belongs to the peptidase C14A family. As to quaternary structure, heterotetramer that consists of two anti-parallel arranged heterodimers, each one formed by a 17 kDa (p17) and a 12 kDa (p12) subunit. Interacts with BIRC6/bruce. In terms of processing, cleavage by granzyme B, caspase-6, caspase-8 and caspase-10 generates the two active subunits. Additional processing of the propeptides is likely due to the autocatalytic activity of the activated protease. Active heterodimers between the small subunit of caspase-7 protease and the large subunit of caspase-3 also occur and vice versa. Post-translationally, S-nitrosylated on its catalytic site cysteine in unstimulated cell lines and denitrosylated upon activation of the Fas apoptotic pathway, associated with an increase in intracellular caspase activity. Fas therefore activates caspase-3 not only by inducing the cleavage of the caspase zymogen to its active subunits, but also by stimulating the denitrosylation of its active site thiol. Ubiquitinated by BIRC6; this activity is inhibited by DIABLO/SMAC.

Its subcellular location is the cytoplasm. The enzyme catalyses Strict requirement for an Asp residue at positions P1 and P4. It has a preferred cleavage sequence of Asp-Xaa-Xaa-Asp-|- with a hydrophobic amino-acid residue at P2 and a hydrophilic amino-acid residue at P3, although Val or Ala are also accepted at this position.. Inhibited by BIRC6; following inhibition of BIRC6-caspase binding by DIABLO/SMAC, BIRC6 is subjected to caspase cleavage, leading to an increase in active caspases. Involved in the activation cascade of caspases responsible for apoptosis execution. At the onset of apoptosis, it proteolytically cleaves poly(ADP-ribose) polymerase PARP1 at a '216-Asp-|-Gly-217' bond. Cleaves and activates sterol regulatory element binding proteins (SREBPs) between the basic helix-loop-helix leucine zipper domain and the membrane attachment domain. Cleaves and activates caspase-6, -7 and -9 (CASP6, CASP7 and CASP9, respectively). Cleaves and inactivates interleukin-18 (IL18). Triggers cell adhesion in sympathetic neurons through RET cleavage. Cleaves IL-1 beta between an Asp and an Ala, releasing the mature cytokine which is involved in a variety of inflammatory processes. Cleaves and inhibits serine/threonine-protein kinase AKT1 in response to oxidative stress. Acts as an inhibitor of type I interferon production during virus-induced apoptosis by mediating cleavage of antiviral proteins CGAS, IRF3 and MAVS, thereby preventing cytokine overproduction. Also involved in pyroptosis by mediating cleavage and activation of gasdermin-E (GSDME). Cleaves XRCC4 and phospholipid scramblase proteins XKR4, XKR8 and XKR9, leading to promote phosphatidylserine exposure on apoptotic cell surface. Cleaves BIRC6 following inhibition of BIRC6-caspase binding by DIABLO/SMAC. This chain is Caspase-3 (CASP3), found in Bos taurus (Bovine).